The primary structure comprises 346 residues: Eukaryotic translation initiation factor 3 subunit I (346 aa).

WD repeat units follow at residues 8–47 (GHER…RLGT), 50–89 (GHNG…IAHS), 150–189 (EGCA…CLEI), 192–233 (LHKQ…KTYE), and 289–328 (DHFG…FDFK).

This sequence belongs to the eIF-3 subunit I family. In terms of assembly, component of the eukaryotic translation initiation factor 3 (eIF-3) complex.

The protein localises to the cytoplasm. Functionally, component of the eukaryotic translation initiation factor 3 (eIF-3) complex, which is involved in protein synthesis of a specialized repertoire of mRNAs and, together with other initiation factors, stimulates binding of mRNA and methionyl-tRNAi to the 40S ribosome. The eIF-3 complex specifically targets and initiates translation of a subset of mRNAs involved in cell proliferation. The protein is Eukaryotic translation initiation factor 3 subunit I of Eremothecium gossypii (strain ATCC 10895 / CBS 109.51 / FGSC 9923 / NRRL Y-1056) (Yeast).